Here is a 238-residue protein sequence, read N- to C-terminus: MGRKWANIVAKKTAKDGANSKVYAKFGVEIYVAAKKGDPDPETNSALKFVIDRAKQAQVPKHIIDKAIDKAKGNTDETFVEGRYEGFGPNGSMIIVDTLTSNVNRTAANVRSAFGKNGGNMGASGSVSFMFDKKGVVVFAGDDADAIFELLLEADVEVDDVEAEDGTITIYTAPTDLHKAIVALKESGIQEFNVTELEMIPQSEVSLEGDDLATFEKLYDALEDDEDVQKIYTNVDGF.

Belongs to the TACO1 family. YeeN subfamily.

Its subcellular location is the cytoplasm. This Streptococcus suis (strain 05ZYH33) protein is Probable transcriptional regulatory protein SSU05_0402.